Consider the following 284-residue polypeptide: MAELIDGKALAAKLQGKLAQKTAKLKEKTGQTPGLVVVLVGNNPASQIYVRNKERSALAAGFRSKVERLPEETSQEELLSLIETYNQNPDWHGILVQLPLPDHIDDEAVLLAIDPDKDVDGFHPLNMGKLWSGHPVMIPATPAGIMAMFHEYGVELEGKRAVVIGRSNIVGKPMAQLLLAKNATVTLTHSRTHNLAKTAKRADILVVAIGRGHFVTKDFVKEGAVVIDVGMNRDENGKLIGDVQFDEVSEIASLITPVPGGVGPMTITMLMEQTYQAFKRSLES.

NADP(+) is bound by residues 165-167 and S190; that span reads GRS.

This sequence belongs to the tetrahydrofolate dehydrogenase/cyclohydrolase family. Homodimer.

It catalyses the reaction (6R)-5,10-methylene-5,6,7,8-tetrahydrofolate + NADP(+) = (6R)-5,10-methenyltetrahydrofolate + NADPH. The catalysed reaction is (6R)-5,10-methenyltetrahydrofolate + H2O = (6R)-10-formyltetrahydrofolate + H(+). It functions in the pathway one-carbon metabolism; tetrahydrofolate interconversion. Functionally, catalyzes the oxidation of 5,10-methylenetetrahydrofolate to 5,10-methenyltetrahydrofolate and then the hydrolysis of 5,10-methenyltetrahydrofolate to 10-formyltetrahydrofolate. The polypeptide is Bifunctional protein FolD (Streptococcus gordonii (strain Challis / ATCC 35105 / BCRC 15272 / CH1 / DL1 / V288)).